The chain runs to 33 residues: Alpha-amanitin proprotein (33 aa).

Residues 1 to 10 (MSDINATRLP) constitute a propeptide that is removed on maturation. (3R,4R)-4,5-dihydroxyisoleucine; in form alpha-amanitin is present on I11. I11 is modified ((3R,4S)-4-hydroxyisoleucine; in form gamma-amanitin). Positions 11-18 (IWGIGCNP) form a cross-link, cyclopeptide (Ile-Pro). A cross-link (2'-cysteinyl-6'-hydroxytryptophan sulfoxide (Trp-Cys)) is located at residues 12 to 16 (WGIGC). A 4-hydroxyproline modification is found at P18. Residues 19–33 (CVGDEVTALITRGEA) constitute a propeptide that is removed on maturation.

It belongs to the MSDIN fungal toxin family. Post-translationally, processed by the macrocyclase-peptidase enzyme POPB to yield a toxic cyclic decapeptide. POPB first removes 10 residues from the N-terminus. Conformational trapping of the remaining peptide forces the enzyme to release this intermediate rather than proceed to macrocyclization. The enzyme rebinds the remaining peptide in a different conformation and catalyzes macrocyclization of the N-terminal 8 residues.

Major toxin belonging to the bicyclic octapeptides amatoxins that acts by binding non-competitively to RNA polymerase II and greatly slowing the elongation of transcripts from target promoters. The sequence is that of Alpha-amanitin proprotein from Amanita pallidorosea.